We begin with the raw amino-acid sequence, 396 residues long: 1-deoxy-D-xylulose 5-phosphate reductoisomerase (396 aa).

5 residues coordinate NADPH: Thr-13, Gly-14, Ser-15, Ile-16, and Asn-127. Lys-128 contributes to the 1-deoxy-D-xylulose 5-phosphate binding site. Residue Glu-129 participates in NADPH binding. Asp-153 is a Mn(2+) binding site. 1-deoxy-D-xylulose 5-phosphate contacts are provided by Ser-154, Glu-155, Ser-184, and His-207. Glu-155 is a Mn(2+) binding site. Position 213 (Gly-213) interacts with NADPH. 4 residues coordinate 1-deoxy-D-xylulose 5-phosphate: Ser-220, Asn-225, Lys-226, and Glu-229. Residue Glu-229 participates in Mn(2+) binding.

It belongs to the DXR family. Requires Mg(2+) as cofactor. It depends on Mn(2+) as a cofactor.

It catalyses the reaction 2-C-methyl-D-erythritol 4-phosphate + NADP(+) = 1-deoxy-D-xylulose 5-phosphate + NADPH + H(+). It functions in the pathway isoprenoid biosynthesis; isopentenyl diphosphate biosynthesis via DXP pathway; isopentenyl diphosphate from 1-deoxy-D-xylulose 5-phosphate: step 1/6. Functionally, catalyzes the NADPH-dependent rearrangement and reduction of 1-deoxy-D-xylulose-5-phosphate (DXP) to 2-C-methyl-D-erythritol 4-phosphate (MEP). The polypeptide is 1-deoxy-D-xylulose 5-phosphate reductoisomerase (Pseudomonas syringae pv. tomato (strain ATCC BAA-871 / DC3000)).